The primary structure comprises 612 residues: Elongation factor 4 (612 aa).

The region spanning 12-194 (SRIRNFSIIA…QIVEKVPAPS (183 aa)) is the tr-type G domain. Residues 24–29 (DHGKST) and 141–144 (NKID) contribute to the GTP site.

It belongs to the TRAFAC class translation factor GTPase superfamily. Classic translation factor GTPase family. LepA subfamily.

Its subcellular location is the cell membrane. The catalysed reaction is GTP + H2O = GDP + phosphate + H(+). Functionally, required for accurate and efficient protein synthesis under certain stress conditions. May act as a fidelity factor of the translation reaction, by catalyzing a one-codon backward translocation of tRNAs on improperly translocated ribosomes. Back-translocation proceeds from a post-translocation (POST) complex to a pre-translocation (PRE) complex, thus giving elongation factor G a second chance to translocate the tRNAs correctly. Binds to ribosomes in a GTP-dependent manner. The chain is Elongation factor 4 from Bacillus licheniformis (strain ATCC 14580 / DSM 13 / JCM 2505 / CCUG 7422 / NBRC 12200 / NCIMB 9375 / NCTC 10341 / NRRL NRS-1264 / Gibson 46).